A 498-amino-acid chain; its full sequence is Glycylpeptide N-tetradecanoyltransferase 2 (498 aa).

The segment at 1–87 is disordered; it reads MAEDSESAAS…QPPSKNSTIP (87 aa). Residues 15–32 show a composition bias toward acidic residues; it reads ELDDQDTCGIDGDNEEET. Position 38 is a phosphoserine (Ser38). Basic residues predominate over residues 46–57; that stretch reads KKKKKKQKRKKE. Positions 61–72 are enriched in polar residues; it reads SGGTKSDSASDS. Tetradecanoyl-CoA-binding residues include His117, Trp122, Leu250, Val252, Ser258, Arg260, Val261, and Ala262.

It belongs to the NMT family.

Its subcellular location is the cytoplasm. The protein resides in the membrane. It catalyses the reaction N-terminal glycyl-[protein] + tetradecanoyl-CoA = N-tetradecanoylglycyl-[protein] + CoA + H(+). The enzyme catalyses N-terminal glycyl-L-lysyl-[protein] + tetradecanoyl-CoA = N-terminal glycyl-(N(6)-tetradecanoyl)-L-lysyl-[protein] + CoA + H(+). Its function is as follows. Adds a myristoyl group to the N-terminal glycine residue of certain cellular and viral proteins. Also able to mediate N-terminal lysine myristoylation of proteins: catalyzes myristoylation of ARF6 on both 'Gly-2' and 'Lys-3'. Lysine myristoylation is required to maintain ARF6 on membranes during the GTPase cycle. The protein is Glycylpeptide N-tetradecanoyltransferase 2 (NMT2) of Bos taurus (Bovine).